A 396-amino-acid polypeptide reads, in one-letter code: NADH-quinone oxidoreductase subunit D (396 aa).

The protein belongs to the complex I 49 kDa subunit family. In terms of assembly, NDH-1 is composed of 14 different subunits. Subunits NuoB, C, D, E, F, and G constitute the peripheral sector of the complex.

The protein resides in the cell inner membrane. The catalysed reaction is a quinone + NADH + 5 H(+)(in) = a quinol + NAD(+) + 4 H(+)(out). In terms of biological role, NDH-1 shuttles electrons from NADH, via FMN and iron-sulfur (Fe-S) centers, to quinones in the respiratory chain. The immediate electron acceptor for the enzyme in this species is believed to be ubiquinone. Couples the redox reaction to proton translocation (for every two electrons transferred, four hydrogen ions are translocated across the cytoplasmic membrane), and thus conserves the redox energy in a proton gradient. This is NADH-quinone oxidoreductase subunit D from Brucella anthropi (strain ATCC 49188 / DSM 6882 / CCUG 24695 / JCM 21032 / LMG 3331 / NBRC 15819 / NCTC 12168 / Alc 37) (Ochrobactrum anthropi).